An 893-amino-acid chain; its full sequence is Alanine--tRNA ligase (893 aa).

The Zn(2+) site is built by His575, His579, Cys677, and His681.

It belongs to the class-II aminoacyl-tRNA synthetase family. It depends on Zn(2+) as a cofactor.

The protein resides in the cytoplasm. It catalyses the reaction tRNA(Ala) + L-alanine + ATP = L-alanyl-tRNA(Ala) + AMP + diphosphate. Catalyzes the attachment of alanine to tRNA(Ala) in a two-step reaction: alanine is first activated by ATP to form Ala-AMP and then transferred to the acceptor end of tRNA(Ala). Also edits incorrectly charged Ser-tRNA(Ala) and Gly-tRNA(Ala) via its editing domain. In Synechococcus sp. (strain CC9311), this protein is Alanine--tRNA ligase.